We begin with the raw amino-acid sequence, 342 residues long: Growth hormone-regulated TBC protein 1 (342 aa).

Residues Gly72–Gly263 form the Rab-GAP TBC domain.

May act as a GTPase-activating protein for Rab family protein(s). This Xenopus laevis (African clawed frog) protein is Growth hormone-regulated TBC protein 1 (grtp1).